Consider the following 484-residue polypeptide: L-amino-acid oxidase (484 aa).

Residues Cys-8 and Cys-171 are joined by a disulfide bond. Residues 41 to 42 (MS), 61 to 62 (EA), and Arg-69 contribute to the FAD site. His-73 provides a ligand contact to Zn(2+). Residue 85-88 (GPMR) coordinates FAD. Arg-88 is a substrate binding site. N-linked (GlcNAc...) asparagine glycosylation is present at Asn-170. His-221 is a substrate binding site. Position 259 (Val-259) interacts with FAD. Glu-277 contributes to the Zn(2+) binding site. Cysteines 329 and 410 form a disulfide. Tyr-370 contributes to the substrate binding site. FAD is bound by residues Glu-455 and 462-467 (GWIDST). 462–463 (GW) provides a ligand contact to substrate.

Belongs to the flavin monoamine oxidase family. FIG1 subfamily. In terms of assembly, homodimer; non-covalently linked. The cofactor is FAD. In terms of tissue distribution, expressed by the venom gland.

It is found in the secreted. The catalysed reaction is an L-alpha-amino acid + O2 + H2O = a 2-oxocarboxylate + H2O2 + NH4(+). Its function is as follows. Catalyzes an oxidative deamination of predominantly hydrophobic and aromatic L-amino acids, thus producing hydrogen peroxide that may contribute to the diverse toxic effects of this enzyme. Exhibits diverse biological activities, such as hemorrhage, hemolysis, edema, apoptosis of vascular endothelial cells or tumor cell lines, antibacterial and antiparasitic activities, as well as regulation of platelet aggregation. Effects of snake L-amino oxidases on platelets are controversial, since they either induce aggregation or inhibit agonist-induced aggregation. These different effects are probably due to different experimental conditions. The polypeptide is L-amino-acid oxidase (Vipera ammodytes ammodytes (Western sand viper)).